Reading from the N-terminus, the 586-residue chain is Phosphomethylpyrimidine synthase (586 aa).

The segment at 1 to 59 is disordered; that stretch reads MKQSVSAEQIELKSSLPGSKKVYVDGPREGMKVPMREIEQSDTNGVPNPPIRVYDTSGP. The span at 22-39 shows a compositional bias: basic and acidic residues; sequence VYVDGPREGMKVPMREIE. Substrate contacts are provided by residues asparagine 193, methionine 222, tyrosine 251, histidine 287, 307-309, 348-351, and glutamate 387; these read SRG and DGLR. Zn(2+) is bound at residue histidine 391. Tyrosine 414 contacts substrate. Histidine 455 is a binding site for Zn(2+). The [4Fe-4S] cluster site is built by cysteine 535, cysteine 538, and cysteine 543.

The protein belongs to the ThiC family. [4Fe-4S] cluster is required as a cofactor.

The enzyme catalyses 5-amino-1-(5-phospho-beta-D-ribosyl)imidazole + S-adenosyl-L-methionine = 4-amino-2-methyl-5-(phosphooxymethyl)pyrimidine + CO + 5'-deoxyadenosine + formate + L-methionine + 3 H(+). Its pathway is cofactor biosynthesis; thiamine diphosphate biosynthesis. Functionally, catalyzes the synthesis of the hydroxymethylpyrimidine phosphate (HMP-P) moiety of thiamine from aminoimidazole ribotide (AIR) in a radical S-adenosyl-L-methionine (SAM)-dependent reaction. In Bacillus cereus (strain ATCC 10987 / NRS 248), this protein is Phosphomethylpyrimidine synthase.